Consider the following 189-residue polypeptide: Glucose-6-phosphate isomerase (189 aa).

Fe cation contacts are provided by His88, His90, Glu97, and His136.

This sequence belongs to the archaeal-type GPI family. As to quaternary structure, homodimer.

Its subcellular location is the cytoplasm. The catalysed reaction is alpha-D-glucose 6-phosphate = beta-D-fructose 6-phosphate. Its pathway is carbohydrate degradation; glycolysis; D-glyceraldehyde 3-phosphate and glycerone phosphate from D-glucose: step 2/4. The polypeptide is Glucose-6-phosphate isomerase (Thermococcus onnurineus (strain NA1)).